The chain runs to 378 residues: MSEKSDSNDDKSRTRSVVYVYSPEYIQTCDSLSKVPNRASMVHSLIEAYGLLKYMRVVKPHVASIEEMAVFHTDSYLQHLHKISQDGDNDDPQSADFGLGYDCPVVEGIFDYAAAVGGATLTAAQNLLDGKCDVAINWAGGWHHAKKDEASGSCYVNDAVLGILKLREKYDRVLYVDVDLHHGDGVEDAFSFTSKVMTVSLHKFSPGFFPGTGDVTDTGLGKGRWYAVNVPFEDGVRDDRYCQTFTSVMQEVKALFNPEAVVMQLGADTMAGDPMCSFNMTPVGVAKCLTYILGWELPTLLLGGGGYNLANTARCWTYLTGTVLGQTLSSEIPDHEFFTEYGPDYSLEISPSCRPDRNESQHLERVISTIKGNLKNVV.

Positions 15 to 325 (RSVVYVYSPE…WTYLTGTVLG (311 aa)) are histone deacetylase. Substrate is bound at residue aspartate 102. Residue histidine 144 is the Proton acceptor of the active site. Glycine 152 contributes to the substrate binding site. 3 residues coordinate a divalent metal cation: aspartate 179, histidine 181, and aspartate 268. Position 307 (tyrosine 307) interacts with substrate.

This sequence belongs to the histone deacetylase family. HD type 1 subfamily. It depends on a divalent metal cation as a cofactor.

It is found in the nucleus. It localises to the chromosome. Its subcellular location is the cytoplasm. It carries out the reaction N(6)-acetyl-L-lysyl-[histone] + H2O = L-lysyl-[histone] + acetate. It catalyses the reaction N(6)-acetyl-L-lysyl-[protein] + H2O = L-lysyl-[protein] + acetate. The catalysed reaction is N(6)-(2E)-butenoyl-L-lysyl-[protein] + H2O = (2E)-2-butenoate + L-lysyl-[protein]. Its activity is inhibited by trichostatin A (TSA) and butyrate, 2 well known histone deacetylase inhibitors. Functionally, histone deacetylase that catalyzes the deacetylation of lysine residues on the N-terminal part of the core histones (H2A, H2B, H3 and H4). Histone deacetylation gives a tag for epigenetic repression and plays an important role in transcriptional regulation, cell cycle progression and developmental events. Histone deacetylases act via the formation of large multiprotein complexes. Also involved in the deacetylation of non-histone proteins. In addition to protein deacetylase activity, also has protein-lysine deacylase activity: acts as a protein decrotonylase by mediating decrotonylation ((2E)-butenoyl) of histones. This chain is Histone deacetylase 8 (hdac8), found in Danio rerio (Zebrafish).